The chain runs to 343 residues: Protein RecA (343 aa).

ATP is bound at residue 66–73; the sequence is GPESSGKT.

The protein belongs to the RecA family.

The protein resides in the cytoplasm. Functionally, can catalyze the hydrolysis of ATP in the presence of single-stranded DNA, the ATP-dependent uptake of single-stranded DNA by duplex DNA, and the ATP-dependent hybridization of homologous single-stranded DNAs. It interacts with LexA causing its activation and leading to its autocatalytic cleavage. The protein is Protein RecA of Rickettsia bellii (strain RML369-C).